Consider the following 231-residue polypeptide: MGNYLSVAVELVCGLGILFIILKLLGKTQFSQITPFDFISALILGELVGNAVYDHEIKIKEIIFASLLWGVLIYIIEFITQKMKSSRKFLEGEPNIVIRKGELQYKVMKKNKIDINQLQSLLRQAGSFSIQEVEYAILETNGMVSVLPKSDFDKPTNKDLQIPSKSVSLPITLIIDGEIVRDNLKEAGVDEQWLKQELKKKNIDKTEDVLFAEWHKNKPLYTVTYEQSRST.

3 consecutive transmembrane segments (helical) span residues 5–25 (LSVAVELVCGLGILFIILKLL), 33–53 (ITPFDFISALILGELVGNAVY), and 59–79 (IKEIIFASLLWGVLIYIIEFI).

Belongs to the UPF0702 family.

Its subcellular location is the cell membrane. The chain is UPF0702 transmembrane protein YetF (yetF) from Bacillus subtilis (strain 168).